The sequence spans 365 residues: Putative carbonic anhydrase-like protein 1 (365 aa).

The signal sequence occupies residues 1–25 (MRFECSHFPLFLIILTCHISPLKSS). The Alpha-carbonic anhydrase domain occupies 28 to 356 (YQWSYDSDVF…TNNRLVRTNI (329 aa)). Residue Tyr-223 is part of the active site. Residues Thr-295 and 295-296 (TS) each bind substrate.

This sequence belongs to the alpha-carbonic anhydrase family.

It localises to the secreted. The polypeptide is Putative carbonic anhydrase-like protein 1 (cah-1) (Caenorhabditis elegans).